We begin with the raw amino-acid sequence, 275 residues long: MVRKIAIYGKGGIGKSTTQQNTAAAMSYFHGKNVMIHGCDPKADSTRLILGGKMQTTMMDTLRELGEGACTPDKVIETGFGGIRCVESGGPEPGVGCAGRGVITAITLMERHGVYENDLDFVFFDVLGDVVCGGFAMPVRDGKAEEIYIVASGEMMALYAANNICRGMVKYARQSGVRLGGIICNSRNVDGERELLEEFCERIGTQMIHFVPRDNIVQKAEFNKKSVIEFDPECNQSQEYRELARKIIENTDFVIPEPMTMDEMEDLVVKYGVLD.

9–16 (GKGGIGKS) is a binding site for ATP. A [4Fe-4S] cluster-binding site is contributed by C97. R100 bears the ADP-ribosylarginine; by dinitrogenase reductase ADP-ribosyltransferase mark. C132 is a binding site for [4Fe-4S] cluster.

This sequence belongs to the NifH/BchL/ChlL family. As to quaternary structure, homodimer. [4Fe-4S] cluster serves as cofactor. In terms of processing, the reversible ADP-ribosylation of Arg-100 inactivates the nitrogenase reductase and regulates nitrogenase activity.

The catalysed reaction is N2 + 8 reduced [2Fe-2S]-[ferredoxin] + 16 ATP + 16 H2O = H2 + 8 oxidized [2Fe-2S]-[ferredoxin] + 2 NH4(+) + 16 ADP + 16 phosphate + 6 H(+). Its function is as follows. The key enzymatic reactions in nitrogen fixation are catalyzed by the nitrogenase complex, which has 2 components: the iron protein and the molybdenum-iron protein. This is Nitrogenase iron protein 1 (nifH1) from Methanothermobacter marburgensis (strain ATCC BAA-927 / DSM 2133 / JCM 14651 / NBRC 100331 / OCM 82 / Marburg) (Methanobacterium thermoautotrophicum).